Here is a 167-residue protein sequence, read N- to C-terminus: Phosphopantetheine adenylyltransferase (167 aa).

A substrate-binding site is contributed by Ser-10. ATP is bound by residues 10-11 (SF) and His-18. Substrate is bound by residues Lys-42, Ala-79, and Arg-93. ATP contacts are provided by residues 94-96 (GLR), Glu-104, and 129-135 (VGHITAT).

This sequence belongs to the bacterial CoaD family. In terms of assembly, homohexamer. The cofactor is Mg(2+).

It localises to the cytoplasm. It catalyses the reaction (R)-4'-phosphopantetheine + ATP + H(+) = 3'-dephospho-CoA + diphosphate. The protein operates within cofactor biosynthesis; coenzyme A biosynthesis; CoA from (R)-pantothenate: step 4/5. Reversibly transfers an adenylyl group from ATP to 4'-phosphopantetheine, yielding dephospho-CoA (dPCoA) and pyrophosphate. The sequence is that of Phosphopantetheine adenylyltransferase from Methylocella silvestris (strain DSM 15510 / CIP 108128 / LMG 27833 / NCIMB 13906 / BL2).